The primary structure comprises 184 residues: Ethylene-responsive transcription factor ERF122 (184 aa).

The AP2/ERF DNA-binding region spans 120 to 177 (KYKGVRKKPSGKWAAEIWDPRSKSRRWLGTFLTAEMAAQSYNDAAAEYRARRGKTNGE).

Belongs to the AP2/ERF transcription factor family. ERF subfamily.

The protein localises to the nucleus. Functionally, probably acts as a transcriptional activator. Binds to the GCC-box pathogenesis-related promoter element. May be involved in the regulation of gene expression by stress factors and by components of stress signal transduction pathways. This is Ethylene-responsive transcription factor ERF122 (ERF122) from Arabidopsis thaliana (Mouse-ear cress).